The sequence spans 964 residues: Integrator complex subunit 4 (964 aa).

Lys27 is modified (N6-acetyllysine). HEAT repeat units follow at residues Ala67–Phe106, Gln146–Ser184, Gly191–Lys229, Leu230–Tyr264, Ile278–Ser314, Asn370–Ser406, Pro407–Leu445, and Glu447–Leu485. Residue Lys792 forms a Glycyl lysine isopeptide (Lys-Gly) (interchain with G-Cter in SUMO1); alternate linkage. Lys792 participates in a covalent cross-link: Glycyl lysine isopeptide (Lys-Gly) (interchain with G-Cter in SUMO2); alternate.

This sequence belongs to the Integrator subunit 4 family. As to quaternary structure, component of the Integrator complex, composed of core subunits INTS1, INTS2, INTS3, INTS4, INTS5, INTS6, INTS7, INTS8, INTS9/RC74, INTS10, INTS11/CPSF3L, INTS12, INTS13, INTS14 and INTS15. The core complex associates with protein phosphatase 2A subunits PPP2CA and PPP2R1A, to form the Integrator-PP2A (INTAC) complex. INTS4 is part of the RNA endonuclease subcomplex, composed of INTS4, INTS9, INTS11 and inositol hexakisphosphate (InsP6). Interacts with BRAT1; interaction is required for the assembly of the RNA endonuclease subcomplex.

Its subcellular location is the nucleus. It is found in the cytoplasm. In terms of biological role, component of the integrator complex, a multiprotein complex that terminates RNA polymerase II (Pol II) transcription in the promoter-proximal region of genes. The integrator complex provides a quality checkpoint during transcription elongation by driving premature transcription termination of transcripts that are unfavorably configured for transcriptional elongation: the complex terminates transcription by (1) catalyzing dephosphorylation of the C-terminal domain (CTD) of Pol II subunit POLR2A/RPB1 and SUPT5H/SPT5, (2) degrading the exiting nascent RNA transcript via endonuclease activity and (3) promoting the release of Pol II from bound DNA. The integrator complex is also involved in terminating the synthesis of non-coding Pol II transcripts, such as enhancer RNAs (eRNAs), small nuclear RNAs (snRNAs), telomerase RNAs and long non-coding RNAs (lncRNAs). Within the integrator complex, INTS4 acts as an scaffold that links INTS9 and INTS11. Mediates recruitment of cytoplasmic dynein to the nuclear envelope, probably as component of the integrator complex. The sequence is that of Integrator complex subunit 4 (Ints4) from Mus musculus (Mouse).